A 374-amino-acid chain; its full sequence is Glycerophosphodiester phosphodiesterase GDPD2 (374 aa).

Residues 38-326 (FSVIGHRGIG…DFVEEIIEST (289 aa)) form the GP-PDE domain. Positions 330–349 (MIRPPPSSSPLPSPSKDDDV) are disordered. Pro residues predominate over residues 332–342 (RPPPSSSPLPS).

It belongs to the glycerophosphoryl diester phosphodiesterase family. As to expression, expressed in roots, shoots, flowers and siliques.

The catalysed reaction is a sn-glycero-3-phosphodiester + H2O = an alcohol + sn-glycerol 3-phosphate + H(+). This is Glycerophosphodiester phosphodiesterase GDPD2 from Arabidopsis thaliana (Mouse-ear cress).